Here is a 612-residue protein sequence, read N- to C-terminus: MDTLTAPTTQSEQPPPPLTASLSRRYACDRCRSHKLRCNRDLMTSTNSPCQRCRKARVKCTIGASIRVGLSPEELKNGENVHRASPGRSAGSHRTASTPSNHAPRSHGRTFTPESAHQAPPYPSNRSMSGSMRLSPVPWLDMISFDGAQELNFDGSTSGLPMGSHTNGSGPLHAPMGGSTSSNTSSTFLDVRPPLHTPASSKPQQEAWRTGDDSTDLRLLSQIPRTRGGGVTDPAAGLTQQHPAGVTSSAPLVSHDHAFAPPQTSIISEPIPGDDLPAGGRPPTWFPARSRAGSTPSPTELKDACIQKLSDLSASLMKDLDLIITCKTASSFLFTPSDKTAAGYLFKTLDGSMTEDNAVARMLYGSERFLDIIKLFNQLPSLPSSSLSMPAAAAAAAAAASYGSTRPVDSDDAYYYSDLEDTGDIRSRNPTPEDRGNEQWSILQAYLGRAGQGPPMGPSQGSSSRSTTTNCSSSFVEVQKPDVPSILVILSCYTCLLKIYETVFFVIQHVLECSPANPSGTTDIPHTVRDLNINGFFLQNHRTLQIKILIQVSTYMLDSIQKSLGTILSDSMFQALLKTLMKEEGCTITSQGEETGMQGVRDLIRRVEEMLA.

A compositionally biased stretch (polar residues) spans 1 to 12 (MDTLTAPTTQSE). The segment at 1–21 (MDTLTAPTTQSEQPPPPLTAS) is disordered. Positions 28-60 (CDRCRSHKLRCNRDLMTSTNSPCQRCRKARVKC) form a DNA-binding region, zn(2)-C6 fungal-type. The span at 73–82 (EELKNGENVH) shows a compositional bias: basic and acidic residues. Disordered regions lie at residues 73–130 (EELK…SMSG), 154–249 (DGST…VTSS), and 451–470 (GQGPPMGPSQGSSSRSTTTN). 3 stretches are compositionally biased toward polar residues: residues 92–103 (SHRTASTPSNHA), 154–169 (DGSTSGLPMGSHTNGS), and 238–249 (LTQQHPAGVTSS). The segment covering 458-470 (PSQGSSSRSTTTN) has biased composition (low complexity).

The protein localises to the nucleus. Transcription factor that specifically regulates the expression of the gene cluster that mediates the biosynthesis of the cytotoxic leucine-containing cytochalasans, including aspochalasin C, aspochalasin E, TMC-169, flavichalasine F, aspergillin PZ, aspochalasin M and flavichalasine G. This chain is Transcription factor ffsR, found in Aspergillus flavipes.